Consider the following 356-residue polypeptide: UDP-N-acetylglucosamine--N-acetylmuramyl-(pentapeptide) pyrophosphoryl-undecaprenol N-acetylglucosamine transferase (356 aa).

UDP-N-acetyl-alpha-D-glucosamine contacts are provided by residues 11–13 (TGG), N117, R160, S188, and Q290.

The protein belongs to the glycosyltransferase 28 family. MurG subfamily.

Its subcellular location is the cell inner membrane. The enzyme catalyses di-trans,octa-cis-undecaprenyl diphospho-N-acetyl-alpha-D-muramoyl-L-alanyl-D-glutamyl-meso-2,6-diaminopimeloyl-D-alanyl-D-alanine + UDP-N-acetyl-alpha-D-glucosamine = di-trans,octa-cis-undecaprenyl diphospho-[N-acetyl-alpha-D-glucosaminyl-(1-&gt;4)]-N-acetyl-alpha-D-muramoyl-L-alanyl-D-glutamyl-meso-2,6-diaminopimeloyl-D-alanyl-D-alanine + UDP + H(+). The protein operates within cell wall biogenesis; peptidoglycan biosynthesis. Cell wall formation. Catalyzes the transfer of a GlcNAc subunit on undecaprenyl-pyrophosphoryl-MurNAc-pentapeptide (lipid intermediate I) to form undecaprenyl-pyrophosphoryl-MurNAc-(pentapeptide)GlcNAc (lipid intermediate II). The chain is UDP-N-acetylglucosamine--N-acetylmuramyl-(pentapeptide) pyrophosphoryl-undecaprenol N-acetylglucosamine transferase from Rickettsia bellii (strain RML369-C).